Reading from the N-terminus, the 506-residue chain is Maturase K (506 aa).

It belongs to the intron maturase 2 family. MatK subfamily.

The protein resides in the plastid. Its subcellular location is the chloroplast. In terms of biological role, usually encoded in the trnK tRNA gene intron. Probably assists in splicing its own and other chloroplast group II introns. This is Maturase K from Arctostaphylos uva-ursi (Bearberry).